The following is a 368-amino-acid chain: UDP-N-acetylglucosamine--N-acetylmuramyl-(pentapeptide) pyrophosphoryl-undecaprenol N-acetylglucosamine transferase (368 aa).

UDP-N-acetyl-alpha-D-glucosamine contacts are provided by residues 10 to 12, Asn-124, Ser-196, Ile-251, and Gln-296; that span reads TGG.

The protein belongs to the glycosyltransferase 28 family. MurG subfamily.

It is found in the cell membrane. It carries out the reaction Mur2Ac(oyl-L-Ala-gamma-D-Glu-L-Lys-D-Ala-D-Ala)-di-trans,octa-cis-undecaprenyl diphosphate + UDP-N-acetyl-alpha-D-glucosamine = beta-D-GlcNAc-(1-&gt;4)-Mur2Ac(oyl-L-Ala-gamma-D-Glu-L-Lys-D-Ala-D-Ala)-di-trans,octa-cis-undecaprenyl diphosphate + UDP + H(+). Its pathway is cell wall biogenesis; peptidoglycan biosynthesis. In terms of biological role, cell wall formation. Catalyzes the transfer of a GlcNAc subunit on undecaprenyl-pyrophosphoryl-MurNAc-pentapeptide (lipid intermediate I) to form undecaprenyl-pyrophosphoryl-MurNAc-(pentapeptide)GlcNAc (lipid intermediate II). In Limosilactobacillus fermentum (strain NBRC 3956 / LMG 18251) (Lactobacillus fermentum), this protein is UDP-N-acetylglucosamine--N-acetylmuramyl-(pentapeptide) pyrophosphoryl-undecaprenol N-acetylglucosamine transferase.